Reading from the N-terminus, the 216-residue chain is MSNPIIDIAALRKSYERAELNEDASHADPLKQFDQWLNEAIAAQVPEPNAMTLATVDSKLRPSTRVVLVKGYDARGIVWFTNYNSRKGLELAGNPYAALQFHWVELERVVRIEGVVEKVSAEESDAYFNSRPLDSRIGAWASPQSEVIASRSVLVTNAAKYGAKFLLQPPRPPHWGGYRLQPDNWQFWQGRKSRLHDRLRYTLQADSSWLRERLAP.

Residues 12-15 and Lys-70 contribute to the substrate site; that span reads RKSY. Residues 65–70, 80–81, Arg-86, and Lys-87 contribute to the FMN site; these read RVVLVK and FT. Residues Tyr-127, Arg-131, and Ser-135 each coordinate substrate. Residues 144-145 and Trp-188 contribute to the FMN site; that span reads QS. Substrate is bound at residue 194–196; it reads RLH. Arg-198 is an FMN binding site.

It belongs to the pyridoxamine 5'-phosphate oxidase family. Homodimer. The cofactor is FMN.

It carries out the reaction pyridoxamine 5'-phosphate + O2 + H2O = pyridoxal 5'-phosphate + H2O2 + NH4(+). The catalysed reaction is pyridoxine 5'-phosphate + O2 = pyridoxal 5'-phosphate + H2O2. The protein operates within cofactor metabolism; pyridoxal 5'-phosphate salvage; pyridoxal 5'-phosphate from pyridoxamine 5'-phosphate: step 1/1. Its pathway is cofactor metabolism; pyridoxal 5'-phosphate salvage; pyridoxal 5'-phosphate from pyridoxine 5'-phosphate: step 1/1. Its function is as follows. Catalyzes the oxidation of either pyridoxine 5'-phosphate (PNP) or pyridoxamine 5'-phosphate (PMP) into pyridoxal 5'-phosphate (PLP). This is Pyridoxine/pyridoxamine 5'-phosphate oxidase from Polaromonas sp. (strain JS666 / ATCC BAA-500).